We begin with the raw amino-acid sequence, 168 residues long: Endoribonuclease YbeY (168 aa).

The Zn(2+) site is built by H119, H123, and H129.

Belongs to the endoribonuclease YbeY family. It depends on Zn(2+) as a cofactor.

The protein localises to the cytoplasm. In terms of biological role, single strand-specific metallo-endoribonuclease involved in late-stage 70S ribosome quality control and in maturation of the 3' terminus of the 16S rRNA. The sequence is that of Endoribonuclease YbeY from Gluconobacter oxydans (strain 621H) (Gluconobacter suboxydans).